Reading from the N-terminus, the 588-residue chain is DNA ligase (588 aa).

Glutamate 250 provides a ligand contact to ATP. Lysine 252 serves as the catalytic N6-AMP-lysine intermediate. ATP contacts are provided by arginine 257, arginine 272, glutamate 302, phenylalanine 342, arginine 417, and lysine 423.

The protein belongs to the ATP-dependent DNA ligase family. Mg(2+) serves as cofactor.

The enzyme catalyses ATP + (deoxyribonucleotide)n-3'-hydroxyl + 5'-phospho-(deoxyribonucleotide)m = (deoxyribonucleotide)n+m + AMP + diphosphate.. Its function is as follows. DNA ligase that seals nicks in double-stranded DNA during DNA replication, DNA recombination and DNA repair. In Nitrosopumilus maritimus (strain SCM1), this protein is DNA ligase.